A 398-amino-acid chain; its full sequence is Probable peptidoglycan glycosyltransferase FtsW (398 aa).

Topologically, residues 1-20 (MSTQAIRGARGLVLKWGAGR) are cytoplasmic. The helical transmembrane segment at 21–41 (FYLDTVLLSVSLGLMLFGFVM) threads the bilayer. The Periplasmic portion of the chain corresponds to 42–57 (VSSASLHLGEKMASDS). Residues 58–78 (FYFPKHQLVHILLGLAAGWGA) form a helical membrane-spanning segment. Residues 79–92 (ARVRLDTLERHSRS) lie on the Cytoplasmic side of the membrane. A helical membrane pass occupies residues 93–113 (LFWAGIALLVLVLIPGVGKSV). Topologically, residues 114 to 121 (NGSVRWIN) are periplasmic. A helical membrane pass occupies residues 122 to 142 (LFGLRVQVSEVFKLVAAIYVA). Residues 143-153 (GYISRHLDTVR) are Cytoplasmic-facing. The helical transmembrane segment at 154 to 174 (TSVKGMIFPLSLLAIGAVLLL) threads the bilayer. Residues 175-177 (KEP) lie on the Periplasmic side of the membrane. Residues 178–198 (DFGATAVVMATALGMLFLAGA) form a helical membrane-spanning segment. R199 is a topological domain (cytoplasmic). The chain crosses the membrane as a helical span at residues 200–220 (LWVFVGLLGLVAVAGTVLIYT). Over 221–289 (AEYRLRRVLS…LFSVIGEELG (69 aa)) the chain is Periplasmic. Residues 290–310 (LWGATTVILLFAIVVWRALAI) traverse the membrane as a helical segment. The Cytoplasmic portion of the chain corresponds to 311 to 318 (GRLAERSG). Residues 319–339 (NLFAAFLAYGIGIWLGLQSFI) traverse the membrane as a helical segment. Over 340 to 355 (NMGVNMGMLPTKGLTL) the chain is Periplasmic. A helical membrane pass occupies residues 356–376 (PLMSYGGGSMMVVCAAIGLLF). Residues 377–398 (RIRSEAVASFLGNGRKGLWPGV) are Cytoplasmic-facing.

This sequence belongs to the SEDS family. FtsW subfamily.

It localises to the cell inner membrane. The enzyme catalyses [GlcNAc-(1-&gt;4)-Mur2Ac(oyl-L-Ala-gamma-D-Glu-L-Lys-D-Ala-D-Ala)](n)-di-trans,octa-cis-undecaprenyl diphosphate + beta-D-GlcNAc-(1-&gt;4)-Mur2Ac(oyl-L-Ala-gamma-D-Glu-L-Lys-D-Ala-D-Ala)-di-trans,octa-cis-undecaprenyl diphosphate = [GlcNAc-(1-&gt;4)-Mur2Ac(oyl-L-Ala-gamma-D-Glu-L-Lys-D-Ala-D-Ala)](n+1)-di-trans,octa-cis-undecaprenyl diphosphate + di-trans,octa-cis-undecaprenyl diphosphate + H(+). It functions in the pathway cell wall biogenesis; peptidoglycan biosynthesis. Peptidoglycan polymerase that is essential for cell division. The sequence is that of Probable peptidoglycan glycosyltransferase FtsW from Methylococcus capsulatus (strain ATCC 33009 / NCIMB 11132 / Bath).